The sequence spans 180 residues: Nudix hydrolase 16, mitochondrial (180 aa).

A Nudix hydrolase domain is found at 18 to 162; sequence GSRLVAGCIP…WMKDALVEGF (145 aa). Residue Phe60 participates in substrate binding. Mn(2+)-binding residues include Gly63, Glu78, Glu82, and Glu144. Positions 63–84 match the Nudix box motif; it reads GGWENDETVREAAAREAVEEAG.

The protein belongs to the Nudix hydrolase family. Mg(2+) is required as a cofactor. Mn(2+) serves as cofactor. Expressed in roots, leaves, stems and inflorescences.

The protein resides in the mitochondrion. Its function is as follows. Probably mediates the hydrolysis of some nucleoside diphosphate derivatives. In Arabidopsis thaliana (Mouse-ear cress), this protein is Nudix hydrolase 16, mitochondrial (NUDT16).